The sequence spans 209 residues: Thiamine-phosphate synthase (209 aa).

Residues 37–41 (QYRDK) and N69 contribute to the 4-amino-2-methyl-5-(diphosphooxymethyl)pyrimidine site. D70 and D89 together coordinate Mg(2+). S108 contacts 4-amino-2-methyl-5-(diphosphooxymethyl)pyrimidine. 2-[(2R,5Z)-2-carboxy-4-methylthiazol-5(2H)-ylidene]ethyl phosphate is bound at residue 135–137 (SPT). K138 lines the 4-amino-2-methyl-5-(diphosphooxymethyl)pyrimidine pocket. 2-[(2R,5Z)-2-carboxy-4-methylthiazol-5(2H)-ylidene]ethyl phosphate-binding positions include G165 and 185–186 (VS).

Belongs to the thiamine-phosphate synthase family. It depends on Mg(2+) as a cofactor.

It carries out the reaction 2-[(2R,5Z)-2-carboxy-4-methylthiazol-5(2H)-ylidene]ethyl phosphate + 4-amino-2-methyl-5-(diphosphooxymethyl)pyrimidine + 2 H(+) = thiamine phosphate + CO2 + diphosphate. The catalysed reaction is 2-(2-carboxy-4-methylthiazol-5-yl)ethyl phosphate + 4-amino-2-methyl-5-(diphosphooxymethyl)pyrimidine + 2 H(+) = thiamine phosphate + CO2 + diphosphate. The enzyme catalyses 4-methyl-5-(2-phosphooxyethyl)-thiazole + 4-amino-2-methyl-5-(diphosphooxymethyl)pyrimidine + H(+) = thiamine phosphate + diphosphate. It participates in cofactor biosynthesis; thiamine diphosphate biosynthesis; thiamine phosphate from 4-amino-2-methyl-5-diphosphomethylpyrimidine and 4-methyl-5-(2-phosphoethyl)-thiazole: step 1/1. Its function is as follows. Condenses 4-methyl-5-(beta-hydroxyethyl)thiazole monophosphate (THZ-P) and 2-methyl-4-amino-5-hydroxymethyl pyrimidine pyrophosphate (HMP-PP) to form thiamine monophosphate (TMP). The sequence is that of Thiamine-phosphate synthase from Halorhodospira halophila (strain DSM 244 / SL1) (Ectothiorhodospira halophila (strain DSM 244 / SL1)).